The primary structure comprises 458 residues: Probable threonine--tRNA ligase, cytoplasmic (458 aa).

In terms of domain architecture, TGS spans 41–104; the sequence is DPIKITLLPD…EGDCSLEIFG (64 aa).

The protein belongs to the class-II aminoacyl-tRNA synthetase family.

It localises to the cytoplasm. It carries out the reaction tRNA(Thr) + L-threonine + ATP = L-threonyl-tRNA(Thr) + AMP + diphosphate + H(+). The sequence is that of Probable threonine--tRNA ligase, cytoplasmic from Arabidopsis thaliana (Mouse-ear cress).